Reading from the N-terminus, the 377-residue chain is Cyclin-I (377 aa).

The tract at residues 357-377 is disordered; it reads DLSRQEGHASPCPPLQPVSVM. A compositionally biased stretch (pro residues) spans 367–377; that stretch reads PCPPLQPVSVM.

Belongs to the cyclin family. In terms of tissue distribution, highest levels in adult heart, brain and skeletal muscle. Lower levels in adult placenta, lung, kidney and pancreas. Also high levels in fetal brain and lower levels in fetal lung, liver and kidney. Also abundant in testis and thyroid.

Its subcellular location is the nucleus membrane. In Homo sapiens (Human), this protein is Cyclin-I.